The sequence spans 275 residues: Undecaprenyl-diphosphatase (275 aa).

The next 8 helical transmembrane spans lie at 2 to 22 (LDIF…FLPI), 43 to 63 (FINM…IVIY), 83 to 103 (WQIW…GLPL), 111 to 131 (MTSW…FIVL), 161 to 181 (VLSM…AMLI), 186 to 206 (YVAT…ASLL), 225 to 245 (ILLV…KFLL), and 255 to 275 (PFGW…LVFA).

It belongs to the UppP family.

It is found in the cell membrane. It carries out the reaction di-trans,octa-cis-undecaprenyl diphosphate + H2O = di-trans,octa-cis-undecaprenyl phosphate + phosphate + H(+). Its function is as follows. Catalyzes the dephosphorylation of undecaprenyl diphosphate (UPP). Confers resistance to bacitracin. This chain is Undecaprenyl-diphosphatase, found in Lactobacillus delbrueckii subsp. bulgaricus (strain ATCC 11842 / DSM 20081 / BCRC 10696 / JCM 1002 / NBRC 13953 / NCIMB 11778 / NCTC 12712 / WDCM 00102 / Lb 14).